Reading from the N-terminus, the 143-residue chain is Nucleoside diphosphate kinase (143 aa).

ATP contacts are provided by K11, F59, R87, T93, R104, and N114. H117 (pros-phosphohistidine intermediate) is an active-site residue.

It belongs to the NDK family. In terms of assembly, homotetramer. Mg(2+) serves as cofactor.

It is found in the cytoplasm. The enzyme catalyses dZDP + ATP = dZTP + ADP. The catalysed reaction is a 2'-deoxyribonucleoside 5'-diphosphate + ATP = a 2'-deoxyribonucleoside 5'-triphosphate + ADP. It catalyses the reaction a ribonucleoside 5'-diphosphate + ATP = a ribonucleoside 5'-triphosphate + ADP. It functions in the pathway purine metabolism. In terms of biological role, major role in the synthesis of nucleoside triphosphates other than ATP. The ATP gamma phosphate is transferred to the NDP beta phosphate via a ping-pong mechanism, using a phosphorylated active-site intermediate. Its function is as follows. (Microbial infection) Catalyzes the phosphorylation of dZDP to dZTP, when the bacterium is infected by a phage that produces the substrate for the synthesis of dZTP (2- amino-2'-deoxyadenosine 5'-triphosphate), which is then used by the phage as a DNA polymerase substrate. The polypeptide is Nucleoside diphosphate kinase (Salmonella paratyphi C (strain RKS4594)).